We begin with the raw amino-acid sequence, 103 residues long: Enhancer of rudimentary homolog (103 aa).

The protein belongs to the E(R) family. Homodimer.

May have a role in the cell cycle. The protein is Enhancer of rudimentary homolog of Aedes aegypti (Yellowfever mosquito).